The sequence spans 716 residues: Leucine-rich repeat neuronal protein 1 (716 aa).

The N-terminal stretch at methionine 1–serine 25 is a signal peptide. The region spanning serine 26–serine 72 is the LRRNT domain. At serine 26–alanine 631 the chain is on the extracellular side. A glycan (N-linked (GlcNAc...) asparagine) is linked at asparagine 69. 9 LRR repeats span residues aspartate 73–phenylalanine 95, asparagine 96–asparagine 117, glutamine 120–aspartate 141, asparagine 144–glycine 165, asparagine 168–serine 189, asparagine 192–proline 213, asparagine 216–glycine 237, serine 240–lysine 261, and asparagine 264–asparagine 285. 3 N-linked (GlcNAc...) asparagine glycosylation sites follow: asparagine 96, asparagine 106, and asparagine 117. The LRRCT domain occupies asparagine 371–proline 424. N-linked (GlcNAc...) asparagine glycosylation is present at asparagine 385. The region spanning proline 424 to lysine 515 is the Ig-like C2-type domain. The cysteines at positions 447 and 499 are disulfide-linked. N-linked (GlcNAc...) asparagine glycosylation is found at asparagine 517, asparagine 582, and asparagine 611. One can recognise a Fibronectin type-III domain in the interval glutamine 525–alanine 617. A helical transmembrane segment spans residues leucine 632–isoleucine 652. Topologically, residues alanine 653–tryptophan 716 are cytoplasmic. Positions aspartate 691–alanine 700 are enriched in basic and acidic residues. The tract at residues aspartate 691 to tryptophan 716 is disordered. Residues threonine 702–tryptophan 716 are compositionally biased toward polar residues.

The protein localises to the membrane. This Bos taurus (Bovine) protein is Leucine-rich repeat neuronal protein 1 (LRRN1).